The chain runs to 674 residues: Cysteine-rich receptor-like protein kinase 6 (674 aa).

The first 24 residues, 1-24 (MSSLISFNFLFLFSFLTSSFTASA), serve as a signal peptide directing secretion. Residues 25 to 289 (QDPFYLNHYC…LPGKSGNSTV (265 aa)) lie on the Extracellular side of the membrane. Gnk2-homologous domains lie at 28 to 132 (FYLN…HKNI) and 139 to 245 (NEGE…LYPF). N-linked (GlcNAc...) asparagine glycosylation is found at Asn-36, Asn-43, Asn-61, Asn-70, Asn-104, Asn-178, and Asn-247. The span at 254–266 (PPLPPPPPPPPPR) shows a compositional bias: pro residues. Residues 254–284 (PPLPPPPPPPPPRESLVSTPPISSSSLPGKS) form a disordered region. Positions 268–284 (SLVSTPPISSSSLPGKS) are enriched in low complexity. Asn-286 carries an N-linked (GlcNAc...) asparagine glycan. The helical transmembrane segment at 290–310 (LVVAVVVLAVLLFIALVGYCF) threads the bilayer. The Cytoplasmic portion of the chain corresponds to 311–674 (LAKKKKKTFD…DESITDLYPR (364 aa)). One can recognise a Protein kinase domain in the interval 351–637 (FAESNKIGRG…TLPVPRQPGF (287 aa)). ATP contacts are provided by residues 357-365 (IGRGGFGEV) and Lys-379. Tyr-424 carries the phosphotyrosine modification. The Proton acceptor role is filled by Asp-476. A Phosphoserine modification is found at Ser-480. Thr-516 is modified (phosphothreonine). A Phosphotyrosine modification is found at Tyr-524. The disordered stretch occupies residues 648-674 (LDSDQSTTTKSFPASIDDESITDLYPR). Over residues 650 to 659 (SDQSTTTKSF) the composition is skewed to polar residues.

Belongs to the protein kinase superfamily. Ser/Thr protein kinase family. CRK subfamily.

It localises to the membrane. It carries out the reaction L-seryl-[protein] + ATP = O-phospho-L-seryl-[protein] + ADP + H(+). The catalysed reaction is L-threonyl-[protein] + ATP = O-phospho-L-threonyl-[protein] + ADP + H(+). This Arabidopsis thaliana (Mouse-ear cress) protein is Cysteine-rich receptor-like protein kinase 6 (CRK6).